The chain runs to 250 residues: Probable aquaporin TIP2-2 (250 aa).

An N-acetylmethionine modification is found at methionine 1. Topologically, residues 1–24 (MVKIEIGSVGDSFSVASLKAYLSE) are cytoplasmic. Lysine 3 is subject to N6,N6-dimethyllysine. The chain crosses the membrane as a helical span at residues 25 to 45 (FIATLLFVFAGVGSALAFAKL). The Vacuolar portion of the chain corresponds to 46 to 53 (TSDAALDP). Residues 54–74 (AGLVAVAVAHAFALFVGVSIA) traverse the membrane as a helical segment. Residues 75-101 (ANISGGHLNPAVTLGLAVGGNITVITG) lie on the Cytoplasmic side of the membrane. The NPA 1 signature appears at 83 to 85 (NPA). A helical membrane pass occupies residues 102 to 122 (FFYWIAQCLGSIVACLLLVFV). At 123-133 (TNGESVPTHGV) the chain is on the vacuolar side. A helical membrane pass occupies residues 134 to 154 (AAGLGAIEGVVMEIVVTFALV). Residues 155 to 168 (YTVYATAADPKKGS) lie on the Cytoplasmic side of the membrane. The helical transmembrane segment at 169–189 (LGTIAPIAIGFIVGANILAAG) threads the bilayer. The Vacuolar portion of the chain corresponds to 190-210 (PFSGGSMNPARSFGPAVVSGD). The NPA 2 motif lies at 197 to 199 (NPA). A helical membrane pass occupies residues 211–231 (FSQIWIYWVGPLVGGALAGLI). Over 232–250 (YGDVFIGSYAPAPTTESYP) the chain is Cytoplasmic. Serine 248 carries the post-translational modification Phosphoserine.

It belongs to the MIP/aquaporin (TC 1.A.8) family. TIP (TC 1.A.8.10) subfamily. Interacts with cucumber mosaic virus (CMV) Protein 1a. As to expression, expressed above groung and in roots.

The protein resides in the vacuole membrane. Its function is as follows. Aquaporins facilitate the transport of water and small neutral solutes across cell membranes. The protein is Probable aquaporin TIP2-2 (TIP2-2) of Arabidopsis thaliana (Mouse-ear cress).